The primary structure comprises 439 residues: MLDIKYLRNNRDEANQRLIDRNVEDGVLDKLLADDEKRRSLIRKAEQLKAKRNQVSDQIGAAKRAKDNSAAQKAISDMQTVAGQIKDLDKQLSAIEESVHTQAAHLPNLADPRVPVGPDDSYNVEQRKWQPTDLQGRPAAFSKTPTWLKAHFEIGEDLGILDFQRGVKVSGARFLYYVGAGARLERAVYNFMLDEHRREGYTELLTPYMVTNESMYATGQFPKFVDDAYEVGKNQSMTMIPTAEVALVNWRRDEVLDESELPLYITALSPAFRQEAGAAGKDTRGLIRLHQFNKVEMVKFTKPEDSYNELEKMTVDAENILQKLELPYHVIRLSTGDMGFGSAMTYDLEVWFPTQDKYREISSVSNDEDFQARRGHIQYRDSKTGKLRFVHTLNGSGLAVGRTVAAILENYQNEDGTITIPEVLRPYFGEDKISKENAR.

242–244 provides a ligand contact to L-serine; that stretch reads TAE. 273-275 is an ATP binding site; sequence RQE. Residue Glu296 participates in L-serine binding. 360–363 contacts ATP; sequence EISS. Ser396 is an L-serine binding site.

It belongs to the class-II aminoacyl-tRNA synthetase family. Type-1 seryl-tRNA synthetase subfamily. In terms of assembly, homodimer. The tRNA molecule binds across the dimer.

The protein localises to the cytoplasm. The enzyme catalyses tRNA(Ser) + L-serine + ATP = L-seryl-tRNA(Ser) + AMP + diphosphate + H(+). It catalyses the reaction tRNA(Sec) + L-serine + ATP = L-seryl-tRNA(Sec) + AMP + diphosphate + H(+). The protein operates within aminoacyl-tRNA biosynthesis; selenocysteinyl-tRNA(Sec) biosynthesis; L-seryl-tRNA(Sec) from L-serine and tRNA(Sec): step 1/1. Catalyzes the attachment of serine to tRNA(Ser). Is also able to aminoacylate tRNA(Sec) with serine, to form the misacylated tRNA L-seryl-tRNA(Sec), which will be further converted into selenocysteinyl-tRNA(Sec). The polypeptide is Serine--tRNA ligase (Oenococcus oeni (strain ATCC BAA-331 / PSU-1)).